The primary structure comprises 313 residues: MGNEFQHRTVLLDEAVDALVTRPDGVYVDGTFGRGGHSRAVLARLGDAGRLIAFDKDPRAIETAESIEDARFEIVHDSFAAMKGALDARGVGRVSGVLLDLGVSSPQVDDPARGFSFRANGPLDMRMDPTRGESAAEWLARASVQELTEVIRDYGEERFAFQIAKAIVARRAESDRLGPLDSTGELAQIVGHVVKTREKGKDPATRTFQAIRIHVNQELADLQVVLEAALSLLEQGGRLVVISFHSLEDRIVKRFLQAHASAPAVDRRLPIRAADLPSPPLKLLGRMFPNDAEVAANPRARSAVMRIAERVAP.

S-adenosyl-L-methionine-binding positions include 35–37, Asp-55, Phe-79, Asp-100, and Gln-107; that span reads GGH.

This sequence belongs to the methyltransferase superfamily. RsmH family.

The protein localises to the cytoplasm. It carries out the reaction cytidine(1402) in 16S rRNA + S-adenosyl-L-methionine = N(4)-methylcytidine(1402) in 16S rRNA + S-adenosyl-L-homocysteine + H(+). Functionally, specifically methylates the N4 position of cytidine in position 1402 (C1402) of 16S rRNA. The sequence is that of Ribosomal RNA small subunit methyltransferase H from Burkholderia pseudomallei (strain 1106a).